The following is a 612-amino-acid chain: UBA domain-containing protein 6 (612 aa).

In terms of domain architecture, UBA spans 3–42 (DLDTKIKTLKNMGVSESDAKDSLERCGYDVESAAEFIFSG). Ser-595 carries the phosphoserine modification.

It is found in the cytoplasm. It localises to the nucleus. The protein is UBA domain-containing protein 6 (ucp6) of Schizosaccharomyces pombe (strain 972 / ATCC 24843) (Fission yeast).